Consider the following 319-residue polypeptide: Type II secretion system protein C 2 (319 aa).

Residues 1 to 42 lie on the Cytoplasmic side of the membrane; it reads MARVVFRDARIYLIQWLTKIRHTLNQRQSLNTDKEHLRKIVR. Residues 43–65 traverse the membrane as a helical segment; that stretch reads GMFWLMLLIISAKVAHSLWRYFS. Over 66 to 319 the chain is Periplasmic; the sequence is FSAEYTAVSP…ARHDISIALR (254 aa).

This sequence belongs to the GSP C family. Interacts with outer cell membrane protein GspD2 in the periplasm.

The protein resides in the cell inner membrane. In terms of biological role, involved in a type II secretion system (T2SS, formerly general secretion pathway, GSP) for the export of folded proteins across the outer membrane. This chain is Type II secretion system protein C 2 (gspC2), found in Escherichia coli O78:H11 (strain H10407 / ETEC).